A 414-amino-acid chain; its full sequence is Probable sugar-binding periplasmic protein (414 aa).

An N-terminal signal peptide occupies residues 1–22 (MRKFMTTTAVAALMLAATAARA).

It belongs to the bacterial solute-binding protein 1 family.

The protein localises to the periplasm. In terms of biological role, part of a binding-protein-dependent transport system for a sugar. This Rhizobium meliloti (strain 1021) (Ensifer meliloti) protein is Probable sugar-binding periplasmic protein.